The chain runs to 231 residues: Cytochrome b-c1 complex subunit Rieske, mitochondrial (231 aa).

A mitochondrion-targeting transit peptide spans 1–24 (MAPVSIVSRAAMRAAAAPARAVRA). Residues 25–32 (LTTSTALQ) constitute a propeptide, removed in mature form. The Mitochondrial matrix segment spans residues 33–65 (GSSSSTFESPFKGESKAAKVPDFGKYMSKAPPS). A helical membrane pass occupies residues 66 to 95 (TNMLFSYFMVGTMGAITAAGAKSTIQEFLK). Topologically, residues 96–231 (NMSASADVLA…FPEEGKLVIG (136 aa)) are mitochondrial intermembrane. The Rieske domain occupies 134 to 229 (RHRTPAEIEE…YEFPEEGKLV (96 aa)). [2Fe-2S] cluster contacts are provided by Cys-174, His-176, Cys-193, and His-196. Cysteines 179 and 195 form a disulfide.

It belongs to the Rieske iron-sulfur protein family. In terms of assembly, component of the ubiquinol-cytochrome c oxidoreductase (cytochrome b-c1 complex, complex III, CIII), a multisubunit enzyme composed of 10 subunits. The complex is composed of 3 respiratory subunits cytochrome b (cob), cytochrome c1 (cyt-1) and Rieske protein (fes-1), 2 core protein subunits pep and ucr-1, and 5 low-molecular weight protein subunits qcr6, qcr7, qcr8, qcr9 and probably NCU16844/qcr10. The complex exists as an obligatory dimer and forms supercomplexes (SCs) in the inner mitochondrial membrane with NADH-ubiquinone oxidoreductase (complex I, CI) and cytochrome c oxidase (complex IV, CIV), resulting in different assemblies (supercomplexes SCI(1)III(2), SCIII(2)IV(1) and SCIII(2)IV(2) as well as higher order I(x)III(y)IV(z) megacomplexes). The cofactor is [2Fe-2S] cluster. Post-translationally, processed by both the mitochondrial processing peptidase (MPP) and the mitochondrial intermediate protease (MIP). Initially, MPP removes 25 amino acids from the newly imported precursor in the mitochondrial matrix. This proteolytic processing is then followed by a second proteolytic cleavage by MIP, which removes an octapeptide to generate mature-sized Rieske protein.

It localises to the mitochondrion inner membrane. It carries out the reaction a quinol + 2 Fe(III)-[cytochrome c](out) = a quinone + 2 Fe(II)-[cytochrome c](out) + 2 H(+)(out). Functionally, component of the ubiquinol-cytochrome c oxidoreductase, a multisubunit transmembrane complex that is part of the mitochondrial electron transport chain which drives oxidative phosphorylation. The respiratory chain contains 3 multisubunit complexes succinate dehydrogenase (complex II, CII), ubiquinol-cytochrome c oxidoreductase (cytochrome b-c1 complex, complex III, CIII) and cytochrome c oxidase (complex IV, CIV), that cooperate to transfer electrons derived from NADH and succinate to molecular oxygen, creating an electrochemical gradient over the inner membrane that drives transmembrane transport and the ATP synthase. The cytochrome b-c1 complex catalyzes electron transfer from ubiquinol to cytochrome c, linking this redox reaction to translocation of protons across the mitochondrial inner membrane, with protons being carried across the membrane as hydrogens on the quinol. In the process called Q cycle, 2 protons are consumed from the matrix, 4 protons are released into the intermembrane space and 2 electrons are passed to cytochrome c. The Rieske protein is a catalytic core subunit containing a [2Fe-2S] iron-sulfur cluster. It cycles between 2 conformational states during catalysis to transfer electrons from the quinol bound in the Q(0) site in cytochrome b to cytochrome c1. This chain is Cytochrome b-c1 complex subunit Rieske, mitochondrial (fes-1), found in Neurospora crassa (strain ATCC 24698 / 74-OR23-1A / CBS 708.71 / DSM 1257 / FGSC 987).